Reading from the N-terminus, the 908-residue chain is NADH-quinone oxidoreductase subunit G (908 aa).

One can recognise a 2Fe-2S ferredoxin-type domain in the interval 2–83; that stretch reads ATIHVDGKEY…GTFISIDDEE (82 aa). The [2Fe-2S] cluster site is built by Cys34, Cys45, Cys48, and Cys67. The 40-residue stretch at 83–122 folds into the 4Fe-4S His(Cys)3-ligated-type domain; sequence EAKQFRESVVEWLMTNHPHDCPVCEEGGNCHLQDMTVMTG. Positions 99, 103, 106, 112, 151, 154, 157, 201, 228, 231, 235, and 263 each coordinate [4Fe-4S] cluster. A 4Fe-4S Mo/W bis-MGD-type domain is found at 221 to 277; it reads MQFAPSICQQCSIGCNISPGERYGELRRIENRYNGTVNHYFLCDRGRFGYGYVNLKD.

It belongs to the complex I 75 kDa subunit family. In terms of assembly, composed of 13 different subunits. Subunits NuoCD, E, F, and G constitute the peripheral sector of the complex. Requires [2Fe-2S] cluster as cofactor. The cofactor is [4Fe-4S] cluster.

The enzyme catalyses a quinone + NADH + 5 H(+)(in) = a quinol + NAD(+) + 4 H(+)(out). In terms of biological role, NDH-1 shuttles electrons from NADH, via FMN and iron-sulfur (Fe-S) centers, to quinones in the respiratory chain. The immediate electron acceptor for the enzyme in this species is believed to be ubiquinone. Couples the redox reaction to proton translocation (for every two electrons transferred, four hydrogen ions are translocated across the cytoplasmic membrane), and thus conserves the redox energy in a proton gradient. This chain is NADH-quinone oxidoreductase subunit G (nuoG), found in Salmonella typhi.